The chain runs to 95 residues: Exodeoxyribonuclease 7 small subunit (95 aa).

The protein belongs to the XseB family. Heterooligomer composed of large and small subunits.

The protein localises to the cytoplasm. It catalyses the reaction Exonucleolytic cleavage in either 5'- to 3'- or 3'- to 5'-direction to yield nucleoside 5'-phosphates.. Functionally, bidirectionally degrades single-stranded DNA into large acid-insoluble oligonucleotides, which are then degraded further into small acid-soluble oligonucleotides. The protein is Exodeoxyribonuclease 7 small subunit of Corynebacterium aurimucosum (strain ATCC 700975 / DSM 44827 / CIP 107346 / CN-1) (Corynebacterium nigricans).